A 96-amino-acid polypeptide reads, in one-letter code: Non-specific lipid-transfer protein 2 (96 aa).

An N-terminal signal peptide occupies residues 1–27; the sequence is MMRKLAVLVLAVAMVAACGGGVVGVAG. Disulfide bonds link cysteine 30–cysteine 62, cysteine 38–cysteine 52, cysteine 53–cysteine 88, and cysteine 64–cysteine 95.

Transfer lipids across membranes. May play a role in plant defense or in the biosynthesis of cuticle layers. In Oryza sativa subsp. japonica (Rice), this protein is Non-specific lipid-transfer protein 2 (LTP-2).